Consider the following 500-residue polypeptide: Beta-xylosidase (500 aa).

Catalysis depends on E160, which acts as the Proton donor. E277 acts as the Nucleophile in catalysis.

Belongs to the glycosyl hydrolase 39 family.

It catalyses the reaction Hydrolysis of (1-&gt;4)-beta-D-xylans, to remove successive D-xylose residues from the non-reducing termini.. The chain is Beta-xylosidase (xynB) from Thermoanaerobacterium saccharolyticum (strain DSM 8691 / JW/SL-YS485).